A 327-amino-acid polypeptide reads, in one-letter code: DNA-directed RNA polymerase subunit alpha (327 aa).

An alpha N-terminal domain (alpha-NTD) region spans residues 1–233; it reads MQGSVTEFLK…EQLEAFVDLR (233 aa). An alpha C-terminal domain (alpha-CTD) region spans residues 247 to 327; it reads FDPVLLRPVD…NWPPLGFIDK (81 aa).

It belongs to the RNA polymerase alpha chain family. Homodimer. The RNAP catalytic core consists of 2 alpha, 1 beta, 1 beta' and 1 omega subunit. When a sigma factor is associated with the core the holoenzyme is formed, which can initiate transcription.

It carries out the reaction RNA(n) + a ribonucleoside 5'-triphosphate = RNA(n+1) + diphosphate. DNA-dependent RNA polymerase catalyzes the transcription of DNA into RNA using the four ribonucleoside triphosphates as substrates. This is DNA-directed RNA polymerase subunit alpha from Baumannia cicadellinicola subsp. Homalodisca coagulata.